A 115-amino-acid chain; its full sequence is NADH-ubiquinone oxidoreductase chain 3 (115 aa).

M1 is modified (N-formylmethionine). Transmembrane regions (helical) follow at residues 3 to 23, 55 to 75, and 84 to 104; these read LMLALLTNFTLATLLVIIAFW, FFLVAITFLLFDLEIALLLPL, and LNTMLTMALFLIILLAVSLAY.

In terms of assembly, core subunit of respiratory chain NADH dehydrogenase (Complex I) which is composed of 45 different subunits. Interacts with TMEM186. Interacts with TMEM242.

The protein localises to the mitochondrion inner membrane. The catalysed reaction is a ubiquinone + NADH + 5 H(+)(in) = a ubiquinol + NAD(+) + 4 H(+)(out). In terms of biological role, core subunit of the mitochondrial membrane respiratory chain NADH dehydrogenase (Complex I) which catalyzes electron transfer from NADH through the respiratory chain, using ubiquinone as an electron acceptor. Essential for the catalytic activity of complex I. This is NADH-ubiquinone oxidoreductase chain 3 from Bos taurus (Bovine).